The sequence spans 406 residues: Acetylornithine/succinyldiaminopimelate aminotransferase (406 aa).

Pyridoxal 5'-phosphate is bound by residues 108–109 (GT) and phenylalanine 141. Arginine 144 contributes to the N(2)-acetyl-L-ornithine binding site. Position 226–229 (226–229 (DEVQ)) interacts with pyridoxal 5'-phosphate. Lysine 255 carries the post-translational modification N6-(pyridoxal phosphate)lysine. Serine 283 is a N(2)-acetyl-L-ornithine binding site. Position 284 (threonine 284) interacts with pyridoxal 5'-phosphate.

Belongs to the class-III pyridoxal-phosphate-dependent aminotransferase family. ArgD subfamily. In terms of assembly, homodimer. It depends on pyridoxal 5'-phosphate as a cofactor.

The protein resides in the cytoplasm. The catalysed reaction is N(2)-acetyl-L-ornithine + 2-oxoglutarate = N-acetyl-L-glutamate 5-semialdehyde + L-glutamate. It carries out the reaction N-succinyl-(2S,6S)-2,6-diaminopimelate + 2-oxoglutarate = (S)-2-succinylamino-6-oxoheptanedioate + L-glutamate. It participates in amino-acid biosynthesis; L-arginine biosynthesis; N(2)-acetyl-L-ornithine from L-glutamate: step 4/4. It functions in the pathway amino-acid biosynthesis; L-lysine biosynthesis via DAP pathway; LL-2,6-diaminopimelate from (S)-tetrahydrodipicolinate (succinylase route): step 2/3. Its function is as follows. Involved in both the arginine and lysine biosynthetic pathways. The chain is Acetylornithine/succinyldiaminopimelate aminotransferase from Escherichia coli O6:H1 (strain CFT073 / ATCC 700928 / UPEC).